The sequence spans 229 residues: tRNA (guanine-N(7)-)-methyltransferase (229 aa).

Residues glutamate 59, glutamate 84, aspartate 111, and aspartate 134 each coordinate S-adenosyl-L-methionine. The active site involves aspartate 134. Substrate is bound by residues lysine 138, aspartate 170, and 205–208; that span reads TKFE.

It belongs to the class I-like SAM-binding methyltransferase superfamily. TrmB family.

The enzyme catalyses guanosine(46) in tRNA + S-adenosyl-L-methionine = N(7)-methylguanosine(46) in tRNA + S-adenosyl-L-homocysteine. Its pathway is tRNA modification; N(7)-methylguanine-tRNA biosynthesis. Its function is as follows. Catalyzes the formation of N(7)-methylguanine at position 46 (m7G46) in tRNA. The chain is tRNA (guanine-N(7)-)-methyltransferase from Nitrosospira multiformis (strain ATCC 25196 / NCIMB 11849 / C 71).